The sequence spans 870 residues: Histidine biosynthesis trifunctional protein (870 aa).

Residues 1–285 are phosphoribosyl-AMP cyclohydrolase; it reads METTLPLPFL…KFVVKQKGRF (285 aa). A phosphoribosyl-ATP pyrophosphohydrolase region spans residues 286–367; sequence CHLDQSGCFG…FYFALTRAVA (82 aa). A histidinol dehydrogenase region spans residues 368–870; it reads AGVTLADIER…IRLEHMSKSN (503 aa). Gln693 and His696 together coordinate Zn(2+). Active-site residues include Glu762 and His763. Positions 796 and 855 each coordinate Zn(2+).

In the C-terminal section; belongs to the histidinol dehydrogenase family. Zn(2+) is required as a cofactor.

The catalysed reaction is 1-(5-phospho-beta-D-ribosyl)-5'-AMP + H2O = 1-(5-phospho-beta-D-ribosyl)-5-[(5-phospho-beta-D-ribosylamino)methylideneamino]imidazole-4-carboxamide. It carries out the reaction 1-(5-phospho-beta-D-ribosyl)-ATP + H2O = 1-(5-phospho-beta-D-ribosyl)-5'-AMP + diphosphate + H(+). The enzyme catalyses L-histidinol + 2 NAD(+) + H2O = L-histidine + 2 NADH + 3 H(+). The protein operates within amino-acid biosynthesis; L-histidine biosynthesis; L-histidine from 5-phospho-alpha-D-ribose 1-diphosphate: step 2/9. It functions in the pathway amino-acid biosynthesis; L-histidine biosynthesis; L-histidine from 5-phospho-alpha-D-ribose 1-diphosphate: step 3/9. Its pathway is amino-acid biosynthesis; L-histidine biosynthesis; L-histidine from 5-phospho-alpha-D-ribose 1-diphosphate: step 9/9. This is Histidine biosynthesis trifunctional protein (his-3) from Neurospora crassa (strain ATCC 24698 / 74-OR23-1A / CBS 708.71 / DSM 1257 / FGSC 987).